Consider the following 209-residue polypeptide: Ribosomal RNA large subunit methyltransferase E (209 aa).

Positions 63, 65, 83, 99, and 124 each coordinate S-adenosyl-L-methionine. The active-site Proton acceptor is K164.

Belongs to the class I-like SAM-binding methyltransferase superfamily. RNA methyltransferase RlmE family.

It localises to the cytoplasm. It catalyses the reaction uridine(2552) in 23S rRNA + S-adenosyl-L-methionine = 2'-O-methyluridine(2552) in 23S rRNA + S-adenosyl-L-homocysteine + H(+). Specifically methylates the uridine in position 2552 of 23S rRNA at the 2'-O position of the ribose in the fully assembled 50S ribosomal subunit. The protein is Ribosomal RNA large subunit methyltransferase E of Shewanella denitrificans (strain OS217 / ATCC BAA-1090 / DSM 15013).